Reading from the N-terminus, the 385-residue chain is Chaperone protein DnaJ (385 aa).

The region spanning 5–72 (DYYEVLGVGK…QKRAAYDQFG (68 aa)) is the J domain. The segment at 26–48 (RKLAMKHHPDRNQGDGAKASEEK) is disordered. Basic and acidic residues predominate over residues 35–48 (DRNQGDGAKASEEK). The CR-type zinc finger occupies 145–223 (GKESQIRIPT…CNGAGKVKKQ (79 aa)). 8 residues coordinate Zn(2+): Cys-158, Cys-161, Cys-175, Cys-178, Cys-197, Cys-200, Cys-211, and Cys-214. 4 CXXCXGXG motif repeats span residues 158–165 (CDTCHGSG), 175–182 (CTTCHGAG), 197–204 (CPHCHGSG), and 211–218 (CTSCNGAG). The disordered stretch occupies residues 362–385 (FRKGGDKHSPTSKSWTDRVKDLFK).

This sequence belongs to the DnaJ family. In terms of assembly, homodimer. It depends on Zn(2+) as a cofactor.

The protein resides in the cytoplasm. Its function is as follows. Participates actively in the response to hyperosmotic and heat shock by preventing the aggregation of stress-denatured proteins and by disaggregating proteins, also in an autonomous, DnaK-independent fashion. Unfolded proteins bind initially to DnaJ; upon interaction with the DnaJ-bound protein, DnaK hydrolyzes its bound ATP, resulting in the formation of a stable complex. GrpE releases ADP from DnaK; ATP binding to DnaK triggers the release of the substrate protein, thus completing the reaction cycle. Several rounds of ATP-dependent interactions between DnaJ, DnaK and GrpE are required for fully efficient folding. Also involved, together with DnaK and GrpE, in the DNA replication of plasmids through activation of initiation proteins. This chain is Chaperone protein DnaJ, found in Leptothrix cholodnii (strain ATCC 51168 / LMG 8142 / SP-6) (Leptothrix discophora (strain SP-6)).